The chain runs to 301 residues: Eukaryotic translation initiation factor 3 subunit F (301 aa).

Positions 32 to 169 (VHVHPVALFS…IKSYISSPLG (138 aa)) constitute an MPN domain.

The protein belongs to the eIF-3 subunit F family. In terms of assembly, component of the eukaryotic translation initiation factor 3 (eIF-3) complex.

The protein localises to the cytoplasm. Its function is as follows. Component of the eukaryotic translation initiation factor 3 (eIF-3) complex, which is involved in protein synthesis of a specialized repertoire of mRNAs and, together with other initiation factors, stimulates binding of mRNA and methionyl-tRNAi to the 40S ribosome. The eIF-3 complex specifically targets and initiates translation of a subset of mRNAs involved in cell proliferation. This chain is Eukaryotic translation initiation factor 3 subunit F, found in Mycosarcoma maydis (Corn smut fungus).